A 97-amino-acid polypeptide reads, in one-letter code: Small ribosomal subunit protein bS20 (97 aa).

Belongs to the bacterial ribosomal protein bS20 family.

Binds directly to 16S ribosomal RNA. This is Small ribosomal subunit protein bS20 from Prochlorococcus marinus (strain AS9601).